The chain runs to 562 residues: Arginine--tRNA ligase (562 aa).

Positions 122–132 match the 'HIGH' region motif; it reads PNIAKDMHVGH.

It belongs to the class-I aminoacyl-tRNA synthetase family. As to quaternary structure, monomer.

Its subcellular location is the cytoplasm. It carries out the reaction tRNA(Arg) + L-arginine + ATP = L-arginyl-tRNA(Arg) + AMP + diphosphate. The protein is Arginine--tRNA ligase of Chlamydia abortus (strain DSM 27085 / S26/3) (Chlamydophila abortus).